A 358-amino-acid polypeptide reads, in one-letter code: 3-dehydroquinate synthase (358 aa).

Residues 70 to 75 (DGEAHK), 104 to 108 (GVIGD), 128 to 129 (TT), lysine 141, and lysine 150 contribute to the NAD(+) site. The Zn(2+) site is built by glutamate 183, histidine 246, and histidine 263.

Belongs to the sugar phosphate cyclases superfamily. Dehydroquinate synthase family. The cofactor is NAD(+). Co(2+) serves as cofactor. Zn(2+) is required as a cofactor.

It localises to the cytoplasm. It carries out the reaction 7-phospho-2-dehydro-3-deoxy-D-arabino-heptonate = 3-dehydroquinate + phosphate. It functions in the pathway metabolic intermediate biosynthesis; chorismate biosynthesis; chorismate from D-erythrose 4-phosphate and phosphoenolpyruvate: step 2/7. In terms of biological role, catalyzes the conversion of 3-deoxy-D-arabino-heptulosonate 7-phosphate (DAHP) to dehydroquinate (DHQ). The chain is 3-dehydroquinate synthase from Bordetella bronchiseptica (strain ATCC BAA-588 / NCTC 13252 / RB50) (Alcaligenes bronchisepticus).